A 420-amino-acid polypeptide reads, in one-letter code: UDP-N-acetylglucosamine 1-carboxyvinyltransferase (420 aa).

22–23 (KN) is a binding site for phosphoenolpyruvate. R93 contacts UDP-N-acetyl-alpha-D-glucosamine. C117 (proton donor) is an active-site residue. C117 carries the 2-(S-cysteinyl)pyruvic acid O-phosphothioketal modification. Residues 162 to 165 (KVSV), D307, and I329 each bind UDP-N-acetyl-alpha-D-glucosamine.

This sequence belongs to the EPSP synthase family. MurA subfamily.

Its subcellular location is the cytoplasm. It catalyses the reaction phosphoenolpyruvate + UDP-N-acetyl-alpha-D-glucosamine = UDP-N-acetyl-3-O-(1-carboxyvinyl)-alpha-D-glucosamine + phosphate. It functions in the pathway cell wall biogenesis; peptidoglycan biosynthesis. Functionally, cell wall formation. Adds enolpyruvyl to UDP-N-acetylglucosamine. In Actinobacillus succinogenes (strain ATCC 55618 / DSM 22257 / CCUG 43843 / 130Z), this protein is UDP-N-acetylglucosamine 1-carboxyvinyltransferase.